Here is a 209-residue protein sequence, read N- to C-terminus: Uracil phosphoribosyltransferase (209 aa).

Residues arginine 79, arginine 104, and 131-139 (DPMLATGNS) contribute to the 5-phospho-alpha-D-ribose 1-diphosphate site. Residues isoleucine 194 and 199–201 (GDA) each bind uracil. Aspartate 200 contributes to the 5-phospho-alpha-D-ribose 1-diphosphate binding site.

Belongs to the UPRTase family. Mg(2+) serves as cofactor.

It catalyses the reaction UMP + diphosphate = 5-phospho-alpha-D-ribose 1-diphosphate + uracil. Its pathway is pyrimidine metabolism; UMP biosynthesis via salvage pathway; UMP from uracil: step 1/1. With respect to regulation, allosterically activated by GTP. Catalyzes the conversion of uracil and 5-phospho-alpha-D-ribose 1-diphosphate (PRPP) to UMP and diphosphate. This is Uracil phosphoribosyltransferase from Rhizobium leguminosarum bv. trifolii (strain WSM2304).